A 241-amino-acid polypeptide reads, in one-letter code: Xyloglucan-specific endo-beta-1,4-glucanase 1 (241 aa).

Residues 1 to 19 (MKGFFAGVVAAATLAVASA) form the signal peptide. Glutamate 136 is an active-site residue. 2 N-linked (GlcNAc...) asparagine glycosylation sites follow: asparagine 174 and asparagine 190. Glutamate 222 is a catalytic residue.

Belongs to the glycosyl hydrolase 12 (cellulase H) family. As to quaternary structure, interacts with host apoplastic glucanase inhibitor GIP1.

The protein localises to the secreted. Its subcellular location is the host. The enzyme catalyses xyloglucan + H2O = xyloglucan oligosaccharides.. The xyloglucanase activity is inhibited by the binding of the host apoplastic glucanase inhibitor GIP1. Glycoside hydrolase that exhibits xyloglucanase activity. Acts as an important virulence factor during P.sojae infection but also acts as a pathogen-associated molecular pattern (PAMP) in soybean and solanaceous species, where it can trigger defense responses including cell death. XEG1-induced cell death can be suppressed by P.sojae RxLR effectors. The PAMP activity is independent of its xyloglucanase activity. XEG1 induces plant defense responses in a RLP kinase Serk3/Bak1-dependent manner in Nicotiana benthamiana. Moreover, the perception of XEG1 occurs independently of the perception of ethylene-inducing xylanase Eix2 in Tomato. With truncated paralog XLP1, is required to elevate apoplastic sugar during P.sojae infection. The protein is Xyloglucan-specific endo-beta-1,4-glucanase 1 of Phytophthora sojae (strain P6497) (Soybean stem and root rot agent).